We begin with the raw amino-acid sequence, 314 residues long: Fibrinogen-like protein 1 (314 aa).

Residues 1–22 (MGKIYSFVLVAIALMMGREGWA) form the signal peptide. The stretch at 28 to 62 (CLREQVRLRAQVHQLETRVKQQQTMIAQLLHEKEV) forms a coiled coil. The Fibrinogen C-terminal domain occupies 76 to 308 (LGGKRQYADC…SVVMKIRPSD (233 aa)). 2 disulfides stabilise this stretch: C85–C114 and C250–C263.

As to quaternary structure, homodimer. Interacts (via the Fibrinogen C-terminal domain) with LAG3 (via Ig-like domains 1 and 2). Mainly expressed in liver. Also expressed in brown adipose tissue.

Its subcellular location is the secreted. Its function is as follows. Immune suppressive molecule that inhibits antigen-specific T-cell activation by acting as a major ligand of LAG3. Responsible for LAG3 T-cell inhibitory function. Binds LAG3 independently from MHC class II (MHC-II). Secreted by, and promotes growth of, hepatocytes. This is Fibrinogen-like protein 1 (Fgl1) from Mus musculus (Mouse).